Reading from the N-terminus, the 1774-residue chain is MMVFQSFILGNLVSLCMKIINSVVVVGLYYGFLTTFSIGPSYLFLLRARVMDEGEEGTEKKVSATTGFIAGQLMMFISIYYAPLHLALGRPHTITVLALPYLLFHFFWNNHKHFFDYGSTTRNEMRNLRIQCVFLNNLIFQLFNHFILPSSMLARLVNIYMFRCNNKMLFVTSSFVGWLIGHILFMKWVGLVLVWIQQNHSIRSNVLIRSNKYKFLVSELRNSMARIFSILLFITCVYYLGRIPSPIFTKKLKGTSETEERGGTKQDQEVSTEEAPFPSLFSEEREDLDQIDEIDEIRVNAKEQINKDDEFHIRTYYNYKKVSENLDGNKENSNLEFLKIKKKEDSVLWFEKPFVTLVFDYKRWNRPNRYIKNDQIENAVRNEMSQYFFSACQSDGKDRISFSYPRNISTFFDMIQKKIPSFRREKTPSDKFSTCWSLINEEKKENLKKEFLHRIEALDKEWSVEHILEKTTRFCHNETRKEYLPKIYDPFLQGISRGRIQRLVPFQIITETYIKNNIGRSWINKIHGILLNINYQKFEQTIEKFNRKSSAIEKKLSYFFDPQEEKLNSEEEIKIFKFLFDVVLTDSNDQMLSKNFLDVHEIHKKVPRWSYKLRSDLEELEGENEETIPMEPGIRARKAKRVVIFTDTEPHNEIYTNLKNNQNYDQNDEMVLIRYSQQSDFRREIIQGSMRPQRRKTVIWEFCQANMHSPFFFDKIGKFFFFSFDIRGLTKKILRNFMWKNGKKKLDKKYEDKSKRKEKRRLEIAEVWDSFLFAQILRSSLLVTQSILRKYIILPLLIIIKNSVRMLLFQIPEWSEDLKDWKREMHVKCTYNGVQLSETEFPRKWLTDGIQIKILFPFYLKPWHKSKFHSSQKGRLKKTKDKNDFCFLTVWGMETELPFGSAQKQPSFFEPFFKEFKKKMKKYKTKSLLVLRFFKERDKIFAKEIKNGILKNFIFIKGKRNDLSKGNRIPLFDLREIYELTETKNDSITSNPIIHELSVQNRSMEWKNSSFSENKIKNLIDRINTIRNQIEAISKEKKKITNSSNKTPYESKIIESSKKKWQIVKRINTRLIRKIFYFVKFCLEQLSLGIVVGIMNIPRMTTQFFFESTKKILDKSIYKNEETEDKITKKKNTIYLISTIKKLISNKKKMSYDICSLSQAYVFYKLSQLQVSNFSKLRAVLEYNICGTSLFVTNQIKDFFQKHGIFHYKLKEKTFLNSEINPWKNWLRSHYQYNLPEIVWARLVTEKWKNQINQNSLVLNKSLNKEDSYEKNKFDNYKKLNYLKADSLLNPKQKQNFKKDSIYNIFCYKSINSKEKSFDMPLEIIIDNFLVSSFRGKSNIRDIGEFRTRKYLEWRIIPFWFIKKVNIESAVDTKSQKIYIKTQVQNSEKIDKITKMGLANQKSLFFDWMGMNEEILNYPIANLEFLFFPEFFLFSSTYKIKPWVIPIKLLLFNFNEKKNLNKIITRNKNGFIPSNEKKYLRFYNLTNDEKEKQRNPQLALPNQEKNIEENYAESKIKKRQNKKQYKSNTEVELDLFLTRYSRFQLRWNFFLNKKILNNVKIYCLLVRLKNPNKIAISSIERGEMSLDILMIEKNLTFAKLMKKGILIIEPLRSSVKNDGQLIIYRTIGISLVHKNNHQISQRDKKKIEKSITQLKKKTVNRKKNNYDFFVPEKILSPKRRREFRILICSKLKKKSTRYRNSRFDKNIQNCGQVLNQTKYLDNDKTNLINLKFFLWPNFRLEDLACMNRYWFNTNNGNHFSMIRIHMYTRLKINS.

6 helical membrane-spanning segments follow: residues 19-39 (IINSVVVVGLYYGFLTTFSIG), 68-88 (FIAGQLMMFISIYYAPLHLAL), 91-111 (PHTITVLALPYLLFHFFWNNH), 133-153 (VFLNNLIFQLFNHFILPSSML), 176-196 (VGWLIGHILFMKWVGLVLVWI), and 227-247 (IFSILLFITCVYYLGRIPSPI). Residues 254–268 (GTSETEERGGTKQDQ) show a composition bias toward basic and acidic residues. Positions 254–275 (GTSETEERGGTKQDQEVSTEEA) are disordered.

Belongs to the TIC214 family. As to quaternary structure, part of the Tic complex.

Its subcellular location is the plastid. The protein resides in the chloroplast inner membrane. Its function is as follows. Involved in protein precursor import into chloroplasts. May be part of an intermediate translocation complex acting as a protein-conducting channel at the inner envelope. This Aethionema cordifolium (Lebanon stonecress) protein is Protein TIC 214.